A 270-amino-acid polypeptide reads, in one-letter code: Methionine-rich protein (270 aa).

The signal sequence occupies residues 1-18 (MLSLWAIGLLGLLNQVEA). The segment covering 31–52 (QRSAQFSSSGWGTSPAAQNPWS) has biased composition (polar residues). Positions 31–95 (QRSAQFSSSG…MPGSMPGAMP (65 aa)) are disordered. Low complexity predominate over residues 56-95 (PMPNTNMPNMNTGSLPGSMPGAMPGSMPGAMPGSMPGAMP).

Component of the acid-soluble organic matrix of calcified layers of the shell (at protein level).

It localises to the secreted. In Lottia gigantea (Giant owl limpet), this protein is Methionine-rich protein.